The primary structure comprises 492 residues: Glutamyl-tRNA(Gln) amidotransferase subunit A (492 aa).

Catalysis depends on charge relay system residues K84 and S159. S183 functions as the Acyl-ester intermediate in the catalytic mechanism.

This sequence belongs to the amidase family. GatA subfamily. As to quaternary structure, heterotrimer of A, B and C subunits.

It catalyses the reaction L-glutamyl-tRNA(Gln) + L-glutamine + ATP + H2O = L-glutaminyl-tRNA(Gln) + L-glutamate + ADP + phosphate + H(+). Allows the formation of correctly charged Gln-tRNA(Gln) through the transamidation of misacylated Glu-tRNA(Gln) in organisms which lack glutaminyl-tRNA synthetase. The reaction takes place in the presence of glutamine and ATP through an activated gamma-phospho-Glu-tRNA(Gln). This is Glutamyl-tRNA(Gln) amidotransferase subunit A from Anaeromyxobacter sp. (strain K).